The sequence spans 850 residues: Protein STB2 (850 aa).

Phosphoserine is present on residues Ser-594 and Ser-625.

It to yeast STB6. In terms of assembly, interacts with SIN3.

This chain is Protein STB2 (STB2), found in Saccharomyces cerevisiae (strain ATCC 204508 / S288c) (Baker's yeast).